The following is a 115-amino-acid chain: MFVYTTIMLLLLAEINHSQGCSGLCKINESPQTNIDYRICGDQITQKYTELCGNPAAGRRNRITGLDQRSIFESNLLAKRFLISRRQIVNNRRTDIVEECCAEGCKAEEVKEYCI.

Residues 1–20 form the signal peptide; it reads MFVYTTIMLLLLAEINHSQG. Cystine bridges form between C40–C101, C52–C114, and C100–C105. A propeptide spans 59–93 (c peptide); sequence RRNRITGLDQRSIFESNLLAKRFLISRRQIVNNRR.

Belongs to the insulin family. As to expression, expressed in tentacles.

The protein resides in the secreted. In terms of biological role, heterodimer with unknown function. Surprisingly, the truncated synthetic analog (dimer of 27-58 and 94-115) does not bind to long insulin receptor (HIR-B) and insulin-like growth factor 1 receptor. This truncated synthetic analog shows very weak inhibitory activity on different voltage-gated channels. This is Insulin-like peptide IlO1_i1 from Oulactis sp. (Sea anemone).